The chain runs to 184 residues: Large ribosomal subunit protein uL5 (184 aa).

It belongs to the universal ribosomal protein uL5 family. As to quaternary structure, component of the large ribosomal subunit. Interacts with Fmr1 to form the RNA-induced silencing complex (RISC), a ribonucleoprotein (RNP) complex involved in translation regulation, other components of the complex are RpL5, Rm62, AGO2 and Dcr-1.

It is found in the nucleus. The protein resides in the cytoplasm. Component of the ribosome, a large ribonucleoprotein complex responsible for the synthesis of proteins in the cell. The small ribosomal subunit (SSU) binds messenger RNAs (mRNAs) and translates the encoded message by selecting cognate aminoacyl-transfer RNA (tRNA) molecules. The large subunit (LSU) contains the ribosomal catalytic site termed the peptidyl transferase center (PTC), which catalyzes the formation of peptide bonds, thereby polymerizing the amino acids delivered by tRNAs into a polypeptide chain. The nascent polypeptides leave the ribosome through a tunnel in the LSU and interact with protein factors that function in enzymatic processing, targeting, and the membrane insertion of nascent chains at the exit of the ribosomal tunnel. This Drosophila melanogaster (Fruit fly) protein is Large ribosomal subunit protein uL5 (RpL11).